The sequence spans 242 residues: Small ribosomal subunit protein uS2 (242 aa).

This sequence belongs to the universal ribosomal protein uS2 family.

In Neisseria meningitidis serogroup C (strain 053442), this protein is Small ribosomal subunit protein uS2.